Here is a 536-residue protein sequence, read N- to C-terminus: CTP synthase (536 aa).

The amidoligase domain stretch occupies residues 1 to 267; that stretch reads MSKFVFVTGG…CKQTLNCLEL (267 aa). Ser-13 contacts CTP. Ser-13 is a UTP binding site. ATP-binding positions include 14-19 and Asp-71; that span reads SIGKGI. Asp-71 and Glu-141 together coordinate Mg(2+). Residues 148–150, 188–193, and Lys-224 contribute to the CTP site; these read DIE and KTKPTQ. Residues 188–193 and Lys-224 contribute to the UTP site; that span reads KTKPTQ. The 243-residue stretch at 292-534 folds into the Glutamine amidotransferase type-1 domain; the sequence is KVALVGKYIE…IKASQEKLEQ (243 aa). Gly-354 contacts L-glutamine. Cys-381 acts as the Nucleophile; for glutamine hydrolysis in catalysis. Residues 382-385, Glu-405, and Arg-462 each bind L-glutamine; that span reads LGMQ. Catalysis depends on residues His-507 and Glu-509.

It belongs to the CTP synthase family. As to quaternary structure, homotetramer.

The catalysed reaction is UTP + L-glutamine + ATP + H2O = CTP + L-glutamate + ADP + phosphate + 2 H(+). It catalyses the reaction L-glutamine + H2O = L-glutamate + NH4(+). The enzyme catalyses UTP + NH4(+) + ATP = CTP + ADP + phosphate + 2 H(+). It participates in pyrimidine metabolism; CTP biosynthesis via de novo pathway; CTP from UDP: step 2/2. With respect to regulation, allosterically activated by GTP, when glutamine is the substrate; GTP has no effect on the reaction when ammonia is the substrate. The allosteric effector GTP functions by stabilizing the protein conformation that binds the tetrahedral intermediate(s) formed during glutamine hydrolysis. Inhibited by the product CTP, via allosteric rather than competitive inhibition. Its function is as follows. Catalyzes the ATP-dependent amination of UTP to CTP with either L-glutamine or ammonia as the source of nitrogen. Regulates intracellular CTP levels through interactions with the four ribonucleotide triphosphates. The sequence is that of CTP synthase from Prochlorococcus marinus subsp. pastoris (strain CCMP1986 / NIES-2087 / MED4).